Reading from the N-terminus, the 152-residue chain is 3-dehydroquinate dehydratase (152 aa).

Residue tyrosine 26 is the Proton acceptor of the active site. 3 residues coordinate substrate: asparagine 78, histidine 84, and aspartate 91. Histidine 104 acts as the Proton donor in catalysis. Substrate contacts are provided by residues 105–106 (IS) and arginine 115.

It belongs to the type-II 3-dehydroquinase family. In terms of assembly, homododecamer.

It catalyses the reaction 3-dehydroquinate = 3-dehydroshikimate + H2O. Its pathway is metabolic intermediate biosynthesis; chorismate biosynthesis; chorismate from D-erythrose 4-phosphate and phosphoenolpyruvate: step 3/7. In terms of biological role, catalyzes a trans-dehydration via an enolate intermediate. In Buchnera aphidicola subsp. Cinara cedri (strain Cc), this protein is 3-dehydroquinate dehydratase.